The primary structure comprises 293 residues: Bifunctional protein FolD (293 aa).

NADP(+)-binding positions include 166 to 168 and isoleucine 232; that span reads GAS.

The protein belongs to the tetrahydrofolate dehydrogenase/cyclohydrolase family. In terms of assembly, homodimer.

It carries out the reaction (6R)-5,10-methylene-5,6,7,8-tetrahydrofolate + NADP(+) = (6R)-5,10-methenyltetrahydrofolate + NADPH. The enzyme catalyses (6R)-5,10-methenyltetrahydrofolate + H2O = (6R)-10-formyltetrahydrofolate + H(+). It functions in the pathway one-carbon metabolism; tetrahydrofolate interconversion. Functionally, catalyzes the oxidation of 5,10-methylenetetrahydrofolate to 5,10-methenyltetrahydrofolate and then the hydrolysis of 5,10-methenyltetrahydrofolate to 10-formyltetrahydrofolate. This is Bifunctional protein FolD from Yersinia enterocolitica serotype O:8 / biotype 1B (strain NCTC 13174 / 8081).